Here is a 334-residue protein sequence, read N- to C-terminus: Holliday junction branch migration complex subunit RuvB (334 aa).

Residues 1–182 (MNERMVDQSM…FGVHLRLEYY (182 aa)) form a large ATPase domain (RuvB-L) region. Residues Leu-21, Arg-22, Gly-63, Lys-66, Thr-67, Thr-68, 129–131 (EDF), Arg-172, Tyr-182, and Arg-219 each bind ATP. Residue Thr-67 participates in Mg(2+) binding. The small ATPAse domain (RuvB-S) stretch occupies residues 183 to 253 (NESDLKEIII…TTKHALGLLQ (71 aa)). Residues 256 to 334 (QHGLDYIDHK…HFAKSNEERG (79 aa)) form a head domain (RuvB-H) region. DNA is bound by residues Arg-292, Arg-311, and Arg-316.

It belongs to the RuvB family. In terms of assembly, homohexamer. Forms an RuvA(8)-RuvB(12)-Holliday junction (HJ) complex. HJ DNA is sandwiched between 2 RuvA tetramers; dsDNA enters through RuvA and exits via RuvB. An RuvB hexamer assembles on each DNA strand where it exits the tetramer. Each RuvB hexamer is contacted by two RuvA subunits (via domain III) on 2 adjacent RuvB subunits; this complex drives branch migration. In the full resolvosome a probable DNA-RuvA(4)-RuvB(12)-RuvC(2) complex forms which resolves the HJ.

Its subcellular location is the cytoplasm. It catalyses the reaction ATP + H2O = ADP + phosphate + H(+). Functionally, the RuvA-RuvB-RuvC complex processes Holliday junction (HJ) DNA during genetic recombination and DNA repair, while the RuvA-RuvB complex plays an important role in the rescue of blocked DNA replication forks via replication fork reversal (RFR). RuvA specifically binds to HJ cruciform DNA, conferring on it an open structure. The RuvB hexamer acts as an ATP-dependent pump, pulling dsDNA into and through the RuvAB complex. RuvB forms 2 homohexamers on either side of HJ DNA bound by 1 or 2 RuvA tetramers; 4 subunits per hexamer contact DNA at a time. Coordinated motions by a converter formed by DNA-disengaged RuvB subunits stimulates ATP hydrolysis and nucleotide exchange. Immobilization of the converter enables RuvB to convert the ATP-contained energy into a lever motion, pulling 2 nucleotides of DNA out of the RuvA tetramer per ATP hydrolyzed, thus driving DNA branch migration. The RuvB motors rotate together with the DNA substrate, which together with the progressing nucleotide cycle form the mechanistic basis for DNA recombination by continuous HJ branch migration. Branch migration allows RuvC to scan DNA until it finds its consensus sequence, where it cleaves and resolves cruciform DNA. The polypeptide is Holliday junction branch migration complex subunit RuvB (Staphylococcus aureus (strain N315)).